Reading from the N-terminus, the 450-residue chain is Vacuolar cation/proton exchanger 1c (450 aa).

At 1 to 73 (MAPPESSHHH…LLGGPAAQLQ (73 aa)) the chain is on the cytoplasmic side. The disordered stretch occupies residues 28 to 52 (AAEEEEKKEAAAWTPSSSSSMTGRK). The helical transmembrane segment at 74–94 (EVLLGTKLYPLFSAVPLAVAA) threads the bilayer. Over 95-101 (ESLRLGR) the chain is Extracellular. The chain crosses the membrane as a helical span at residues 102–122 (VWVFAFSLIGLAPLAERVSFL). The Cytoplasmic portion of the chain corresponds to 123-134 (SEHIANTVGPTA). The helical transmembrane segment at 135–155 (GGIMNATCGNVPELIIALFAL) threads the bilayer. The segment at 143-178 (GNVPELIIALFALHKNKMEILKWSLLGSILSNLLLV) is cation selection. The Extracellular portion of the chain corresponds to 156 to 170 (HKNKMEILKWSLLGS). The chain crosses the membrane as a helical span at residues 171 to 191 (ILSNLLLVLGSSLLFGGIVNI). At 192 to 201 (GKERPLDKRQ) the chain is on the cytoplasmic side. A helical membrane pass occupies residues 202-222 (ADVSIGLLLLGVLCHIATLVS). Over 223 to 239 (KYTSSTGDSINSSSVMQ) the chain is Extracellular. A helical transmembrane segment spans residues 240–260 (LSRSCAIVMLIAYFGSLMFQL). The Cytoplasmic portion of the chain corresponds to 261–287 (KTHRQIFELEEDSSDSSSSEDDATDKS). Residues 288–308 (VIGFASAMVWLIGMAVVTAML) form a helical membrane-spanning segment. At 309 to 331 (SSYVVTTIEEASESMGIPVRFIS) the chain is on the extracellular side. Residues 332–352 (IILLPIVGNAAEHAGAIIFAF) traverse the membrane as a helical segment. The tract at residues 339-374 (GNAAEHAGAIIFAFKNKIDISLGITLGSATQISMLV) is cation selection. Topologically, residues 353–360 (KNKIDISL) are cytoplasmic. A helical transmembrane segment spans residues 361–381 (GITLGSATQISMLVVPVILIV). Residues 382-385 (SWVN) lie on the Extracellular side of the membrane. Residues 386-406 (AIPMDLDFNLLETGSLAMAVI) traverse the membrane as a helical segment. Residues 407–424 (TTAFTLQDDKWHYLKGLN) are Cytoplasmic-facing. Residues 425-445 (LVFSYIVIAVCFFVMKALPTL) form a helical membrane-spanning segment. Topologically, residues 446–450 (KKEDD) are extracellular.

Belongs to the Ca(2+):cation antiporter (CaCA) (TC 2.A.19) family. Cation/proton exchanger (CAX) subfamily. In terms of tissue distribution, expressed in leaf blades.

The protein resides in the vacuole membrane. In terms of biological role, vacuolar cation/proton exchanger (CAX). Translocates Ca(2+) and other metal ions into vacuoles using the proton gradient formed by H(+)-ATPase and H(+)-pyrophosphatase. In Oryza sativa subsp. japonica (Rice), this protein is Vacuolar cation/proton exchanger 1c (CAX1c).